Reading from the N-terminus, the 564-residue chain is Ferric/cupric reductase transmembrane component 2 (564 aa).

A run of 2 helical transmembrane segments spans residues 10–30 (TLGS…LFLL) and 66–86 (FIFL…LVML). Asn-106 is a glycosylation site (N-linked (GlcNAc...) asparagine). A helical transmembrane segment spans residues 110–130 (VAARLGYLSCGLFFVSYFFSL). Residues 114 to 229 (LGYLSCGLFF…TCSVLIIFLI (116 aa)) enclose the Ferric oxidoreductase domain. 2 residues coordinate heme: His-150 and His-164. 3 helical membrane-spanning segments follow: residues 152-172 (WLSV…MIFS), 184-204 (ISIY…ASLP), and 210-230 (FFEW…FLIW). 2 residues coordinate heme: His-218 and His-232. Residues 254 to 410 (RLFRSIWNRS…DGPYGTTSNV (157 aa)) enclose the FAD-binding FR-type domain. N-linked (GlcNAc...) asparagine glycosylation is present at Asn-261. 310–316 (HPFTLAS) provides a ligand contact to FAD. Asn-350 carries an N-linked (GlcNAc...) asparagine glycan. An NAD(+)-binding site is contributed by 419 to 427 (LIAGGVGFS). Asn-442, Asn-496, and Asn-548 each carry an N-linked (GlcNAc...) asparagine glycan.

Belongs to the ferric reductase (FRE) family. Requires FAD as cofactor. It depends on heme as a cofactor.

Its subcellular location is the cell membrane. The protein resides in the endoplasmic reticulum membrane. It carries out the reaction 2 a Fe(II)-siderophore + NADP(+) + H(+) = 2 a Fe(III)-siderophore + NADPH. In terms of biological role, metalloreductase responsible for reducing extracellular iron and copper prior to import. Catalyzes the reductive uptake of Fe(3+)-salts and Fe(3+) bound to catecholate or hydroxamate siderophores. Fe(3+) is reduced to Fe(2+), which then dissociates from the siderophore and can be imported by the high-affinity Fe(2+) transport complex in the plasma membrane. Also participates in Cu(2+) reduction and Cu(+) uptake. This chain is Ferric/cupric reductase transmembrane component 2 (frp2), found in Schizosaccharomyces pombe (strain 972 / ATCC 24843) (Fission yeast).